We begin with the raw amino-acid sequence, 254 residues long: Leucyl/phenylalanyl-tRNA--protein transferase (254 aa).

The protein belongs to the L/F-transferase family.

It is found in the cytoplasm. It catalyses the reaction N-terminal L-lysyl-[protein] + L-leucyl-tRNA(Leu) = N-terminal L-leucyl-L-lysyl-[protein] + tRNA(Leu) + H(+). It carries out the reaction N-terminal L-arginyl-[protein] + L-leucyl-tRNA(Leu) = N-terminal L-leucyl-L-arginyl-[protein] + tRNA(Leu) + H(+). The enzyme catalyses L-phenylalanyl-tRNA(Phe) + an N-terminal L-alpha-aminoacyl-[protein] = an N-terminal L-phenylalanyl-L-alpha-aminoacyl-[protein] + tRNA(Phe). Functionally, functions in the N-end rule pathway of protein degradation where it conjugates Leu, Phe and, less efficiently, Met from aminoacyl-tRNAs to the N-termini of proteins containing an N-terminal arginine or lysine. This chain is Leucyl/phenylalanyl-tRNA--protein transferase, found in Burkholderia ambifaria (strain MC40-6).